A 122-amino-acid polypeptide reads, in one-letter code: Chorismate mutase AroH (122 aa).

The region spanning 2–120 (VRGIRGAITV…AVRLRPDLES (119 aa)) is the Chorismate mutase aroH-type domain. The prephenate site is built by Arg6, Arg89, and Tyr107.

As to quaternary structure, homotrimer.

Its subcellular location is the cytoplasm. The enzyme catalyses chorismate = prephenate. The protein operates within metabolic intermediate biosynthesis; prephenate biosynthesis; prephenate from chorismate: step 1/1. Its activity is regulated as follows. Inhibited by 40% with 500 uM tyrosine, and a tyrosine concentration as high as 5 mM reduced activity to 5%. Functionally, catalyzes the Claisen rearrangement of chorismate to prephenate. Probably involved in the aromatic amino acid biosynthesis. In Thermus thermophilus, this protein is Chorismate mutase AroH.